We begin with the raw amino-acid sequence, 613 residues long: Probable potassium transport system protein Kup 1 (613 aa).

12 helical membrane-spanning segments follow: residues 40-60 (VLSM…VVFV), 93-113 (MLLG…TPAI), 127-147 (PALQ…LFLL), 158-178 (LFGP…LFSV), 201-221 (AVQA…AEAL), 237-257 (WFYI…ALLL), 266-286 (PFFL…ATAA), 288-308 (VIAS…AVHL), 327-347 (IYVP…VLAF), 356-376 (AYGI…TVVM), 384-404 (LPAV…FFGA), and 409-429 (VAAG…LMVT).

The protein belongs to the HAK/KUP transporter (TC 2.A.72) family.

Its subcellular location is the cell inner membrane. The catalysed reaction is K(+)(in) + H(+)(in) = K(+)(out) + H(+)(out). Its function is as follows. Transport of potassium into the cell. Likely operates as a K(+):H(+) symporter. In Ralstonia nicotianae (strain ATCC BAA-1114 / GMI1000) (Ralstonia solanacearum), this protein is Probable potassium transport system protein Kup 1.